The chain runs to 260 residues: Cytochrome c oxidase subunit 3 (260 aa).

The next 6 helical transmembrane spans lie at 30 to 50, 81 to 101, 126 to 146, 158 to 178, 196 to 216, and 239 to 259; these read LILW…VLLV, GMIL…WAFF, FLVP…VTWA, AIQS…LQAW, FFVA…FLAV, and WYWH…YWWG.

This sequence belongs to the cytochrome c oxidase subunit 3 family. As to quaternary structure, component of the cytochrome c oxidase (complex IV, CIV), a multisubunit enzyme composed of a catalytic core of 3 subunits and several supernumerary subunits. The complex exists as a monomer or a dimer and forms supercomplexes (SCs) in the inner mitochondrial membrane with ubiquinol-cytochrome c oxidoreductase (cytochrome b-c1 complex, complex III, CIII).

The protein resides in the mitochondrion inner membrane. It carries out the reaction 4 Fe(II)-[cytochrome c] + O2 + 8 H(+)(in) = 4 Fe(III)-[cytochrome c] + 2 H2O + 4 H(+)(out). Its function is as follows. Component of the cytochrome c oxidase, the last enzyme in the mitochondrial electron transport chain which drives oxidative phosphorylation. The respiratory chain contains 3 multisubunit complexes succinate dehydrogenase (complex II, CII), ubiquinol-cytochrome c oxidoreductase (cytochrome b-c1 complex, complex III, CIII) and cytochrome c oxidase (complex IV, CIV), that cooperate to transfer electrons derived from NADH and succinate to molecular oxygen, creating an electrochemical gradient over the inner membrane that drives transmembrane transport and the ATP synthase. Cytochrome c oxidase is the component of the respiratory chain that catalyzes the reduction of oxygen to water. Electrons originating from reduced cytochrome c in the intermembrane space (IMS) are transferred via the dinuclear copper A center (CU(A)) of subunit 2 and heme A of subunit 1 to the active site in subunit 1, a binuclear center (BNC) formed by heme A3 and copper B (CU(B)). The BNC reduces molecular oxygen to 2 water molecules using 4 electrons from cytochrome c in the IMS and 4 protons from the mitochondrial matrix. This is Cytochrome c oxidase subunit 3 (COIII) from Pisaster ochraceus (Ochre sea star).